We begin with the raw amino-acid sequence, 141 residues long: Hemoglobin subunit alpha (141 aa).

One can recognise a Globin domain in the interval 1-141; that stretch reads VLSPADKSNV…VSTVLTSKYR (141 aa). The residue at position 3 (serine 3) is a Phosphoserine. N6-succinyllysine is present on residues lysine 7 and lysine 11. Lysine 16 carries the N6-acetyllysine; alternate modification. Lysine 16 carries the post-translational modification N6-succinyllysine; alternate. Tyrosine 24 is subject to Phosphotyrosine. A Phosphoserine modification is found at serine 35. Lysine 40 is subject to N6-succinyllysine. At serine 49 the chain carries Phosphoserine. Position 58 (histidine 58) interacts with O2. Histidine 87 lines the heme b pocket. Position 102 is a phosphoserine (serine 102). Threonine 108 carries the phosphothreonine modification. Residues serine 124 and serine 131 each carry the phosphoserine modification. 2 positions are modified to phosphothreonine: threonine 134 and threonine 137. Serine 138 is subject to Phosphoserine.

Belongs to the globin family. As to quaternary structure, heterotetramer of two alpha chains and two beta chains. As to expression, red blood cells.

Involved in oxygen transport from the lung to the various peripheral tissues. In terms of biological role, hemopressin acts as an antagonist peptide of the cannabinoid receptor CNR1. Hemopressin-binding efficiently blocks cannabinoid receptor CNR1 and subsequent signaling. This is Hemoglobin subunit alpha (HBA) from Saguinus mystax (Moustached tamarin).